A 36-amino-acid polypeptide reads, in one-letter code: Termicin (36 aa).

Intrachain disulfides connect Cys2-Cys24, Cys7-Cys29, and Cys11-Cys31. Gly36 is subject to Glycine amide.

Expressed in salivary glands and hemocytes.

The protein resides in the secreted. Weak activity against Gram-positive bacteria B.megaterium, S.pyogenes and M.luteus, strong activity against yeasts C.albicans, C.neoformans and S.cerevisiae and filamentous fungi F.oxysporum, F.culmorum, N.crassa and N.hematococca. Less active against filamentous fungus T.viride. Inactive against Gram-positive bacteria A.viridans and S.aureus, filamentous fungi A.fumigatus and B.bassiana and yeast C.glabrata. This Pseudacanthotermes spiniger protein is Termicin.